A 120-amino-acid chain; its full sequence is Chaperonin GroEL (120 aa).

Residue 23–27 (DGTTT) coordinates ATP.

The protein belongs to the chaperonin (HSP60) family. In terms of assembly, forms a cylinder of 14 subunits composed of two heptameric rings stacked back-to-back. Interacts with the co-chaperonin GroES.

It localises to the cytoplasm. It carries out the reaction ATP + H2O + a folded polypeptide = ADP + phosphate + an unfolded polypeptide.. Its function is as follows. Together with its co-chaperonin GroES, plays an essential role in assisting protein folding. The GroEL-GroES system forms a nano-cage that allows encapsulation of the non-native substrate proteins and provides a physical environment optimized to promote and accelerate protein folding. In Mycobacterium kansasii, this protein is Chaperonin GroEL.